Consider the following 305-residue polypeptide: Homoserine kinase (305 aa).

ATP is bound at residue Pro-90–Ser-100.

It belongs to the GHMP kinase family. Homoserine kinase subfamily.

It localises to the cytoplasm. It catalyses the reaction L-homoserine + ATP = O-phospho-L-homoserine + ADP + H(+). It functions in the pathway amino-acid biosynthesis; L-threonine biosynthesis; L-threonine from L-aspartate: step 4/5. Catalyzes the ATP-dependent phosphorylation of L-homoserine to L-homoserine phosphate. This Staphylococcus saprophyticus subsp. saprophyticus (strain ATCC 15305 / DSM 20229 / NCIMB 8711 / NCTC 7292 / S-41) protein is Homoserine kinase.